The primary structure comprises 407 residues: uncharacterized protein (407 aa).

2 coiled-coil regions span residues 96–130 (TDSIEYEDEKLNELEKTRKEHTDKVKLMQQQFKNE) and 287–345 (MKCY…AKTS). Basic and acidic residues predominate over residues 302 to 317 (EKRKDNLQKQNEEAAK). The tract at residues 302-394 (EKRKDNLQKQ…NMDPAINESD (93 aa)) is disordered. A compositionally biased stretch (basic residues) spans 318–331 (ITKRKNRQEKRREK). Over residues 344 to 370 (TSVSSIPDTSSTTTSTNSTPTNTKSNS) the composition is skewed to low complexity.

This is an uncharacterized protein from Acanthamoeba polyphaga (Amoeba).